The following is a 100-amino-acid chain: Small ribosomal subunit protein uS14c (100 aa).

The protein belongs to the universal ribosomal protein uS14 family. Part of the 30S ribosomal subunit.

The protein resides in the plastid. It is found in the chloroplast. Binds 16S rRNA, required for the assembly of 30S particles. The sequence is that of Small ribosomal subunit protein uS14c from Lactuca sativa (Garden lettuce).